The primary structure comprises 1320 residues: Transcriptional activator MN1 (1320 aa).

Residue M1 is modified to N-acetylmethionine. Disordered stretches follow at residues M1–T26, F92–P121, P147–P219, L231–I411, S423–L442, N474–L615, S629–L819, G840–I1150, and P1247–Q1273. The segment covering H98 to H113 has biased composition (basic residues). Composition is skewed to low complexity over residues S202–S214 and Q291–Q309. The span at M338–G366 shows a compositional bias: pro residues. A compositionally biased stretch (pro residues) spans F498–H514. 2 stretches are compositionally biased toward low complexity: residues Q523 to Q550 and R564 to L578. 2 stretches are compositionally biased toward gly residues: residues G582 to G596 and Q701 to G710. A compositionally biased stretch (low complexity) spans S759 to S768. Positions A769 to A784 are enriched in gly residues. 2 stretches are compositionally biased toward low complexity: residues S798–S809 and G895–G905. Residues D914 to N930 are compositionally biased toward polar residues. Phosphoserine is present on residues S950 and S954. Positions G973–A984 are enriched in low complexity. A Phosphoserine modification is found at S1007. Positions E1048–P1066 are enriched in polar residues. A Phosphoserine modification is found at S1081. Over residues Y1118–G1128 the composition is skewed to gly residues.

Interacts with PBX1, PKNOX1, ZBTB24, E2F7, RING1. As to expression, widely expressed in fetal and adult tissues. Highest expression is observed in fetal brain and skeletal muscle, and adult skeletal muscle.

The protein localises to the nucleus. Transcriptional activator which specifically regulates expression of TBX22 in the posterior region of the developing palate. Required during later stages of palate development for growth and medial fusion of the palatal shelves. Promotes maturation and normal function of calvarial osteoblasts, including expression of the osteoclastogenic cytokine TNFSF11/RANKL. Necessary for normal development of the membranous bones of the skull. May play a role in tumor suppression. The chain is Transcriptional activator MN1 (MN1) from Homo sapiens (Human).